Consider the following 273-residue polypeptide: Phosphatidylglycerol--prolipoprotein diacylglyceryl transferase (273 aa).

7 consecutive transmembrane segments (helical) span residues 19 to 39 (VHWY…LASY), 55 to 75 (LVFY…VLFY), 90 to 110 (VWTG…AMIL), 125 to 145 (FIAP…FIGA), 174 to 194 (PSQI…LWWF), 202 to 222 (MAVS…VEFF), and 230 to 250 (GFIL…MLLI). An a 1,2-diacyl-sn-glycero-3-phospho-(1'-sn-glycerol)-binding site is contributed by Arg138.

The protein belongs to the Lgt family.

It localises to the cell inner membrane. It carries out the reaction L-cysteinyl-[prolipoprotein] + a 1,2-diacyl-sn-glycero-3-phospho-(1'-sn-glycerol) = an S-1,2-diacyl-sn-glyceryl-L-cysteinyl-[prolipoprotein] + sn-glycerol 1-phosphate + H(+). The protein operates within protein modification; lipoprotein biosynthesis (diacylglyceryl transfer). Functionally, catalyzes the transfer of the diacylglyceryl group from phosphatidylglycerol to the sulfhydryl group of the N-terminal cysteine of a prolipoprotein, the first step in the formation of mature lipoproteins. The chain is Phosphatidylglycerol--prolipoprotein diacylglyceryl transferase from Acinetobacter baylyi (strain ATCC 33305 / BD413 / ADP1).